A 278-amino-acid chain; its full sequence is Large ribosomal subunit protein uL2 (278 aa).

Disordered regions lie at residues Thr28–His58 and Gly223–Arg278. Residues Arg43–His53 are compositionally biased toward polar residues. A compositionally biased stretch (basic residues) spans Ile268–Arg278.

The protein belongs to the universal ribosomal protein uL2 family. As to quaternary structure, part of the 50S ribosomal subunit. Forms a bridge to the 30S subunit in the 70S ribosome.

Functionally, one of the primary rRNA binding proteins. Required for association of the 30S and 50S subunits to form the 70S ribosome, for tRNA binding and peptide bond formation. It has been suggested to have peptidyltransferase activity; this is somewhat controversial. Makes several contacts with the 16S rRNA in the 70S ribosome. This is Large ribosomal subunit protein uL2 from Nocardioides sp. (strain ATCC BAA-499 / JS614).